The sequence spans 355 residues: Heterogeneous nuclear ribonucleoprotein D0 (355 aa).

The segment at 1–92 (MSEEQFGGDG…SPRHSEAATA (92 aa)) is disordered. An N-acetylserine modification is found at Ser-2. Low complexity-rich tracts occupy residues 11-20 (AAAAATAAVG) and 27-42 (EGAM…AAAG). The span at 43–58 (SGAGTGGGTASGGTEG) shows a compositional bias: gly residues. Positions 64–73 (EGAKIDASKN) are enriched in basic and acidic residues. Ser-71 bears the Phosphoserine mark. Residue Lys-72 forms a Glycyl lysine isopeptide (Lys-Gly) (interchain with G-Cter in SUMO2) linkage. Ser-80, Ser-82, and Ser-83 each carry phosphoserine. A Phosphothreonine modification is found at Thr-91. RRM domains follow at residues 97 to 179 (WKMF…KTKE) and 182 to 261 (KKIF…MSKE). Lys-119 carries the post-translational modification N6-methyllysine. Thr-127 carries the phosphothreonine modification. Lys-129 participates in a covalent cross-link: Glycyl lysine isopeptide (Lys-Gly) (interchain with G-Cter in SUMO2). The residue at position 165 (Lys-165) is an N6-acetyllysine. Position 190 is a phosphoserine (Ser-190). Thr-193 bears the Phosphothreonine mark. Lys-197 is covalently cross-linked (Glycyl lysine isopeptide (Lys-Gly) (interchain with G-Cter in SUMO2)). N6-acetyllysine is present on residues Lys-243 and Lys-251. Residue Tyr-263 is modified to Omega-N-methylarginine. A Phosphoserine modification is found at Ser-271. Arg-272 carries the post-translational modification Omega-N-methylarginine. Gly-273 carries the N6-acetyllysine modification. Arg-278, Arg-280, and Arg-282 each carry omega-N-methylarginine. Residue Gln-292 is modified to N6-acetyllysine. Arg-345 carries the post-translational modification Asymmetric dimethylarginine; alternate. Arg-345 carries the post-translational modification Dimethylated arginine; alternate. Arg-345 carries the omega-N-methylarginine; alternate modification.

As to quaternary structure, identified in a IGF2BP1-dependent mRNP granule complex containing untranslated mRNAs. Part of a complex associated with the FOS mCRD domain and consisting of PABPC1, PAIP1, CSDE1/UNR and SYNCRIP. Interacts with IGF2BP2. Interacts with GTPBP1. Interacts with EIF4G1; the interaction requires RNA. Interacts with EIF3B and RPS3. In terms of processing, arg-345 is dimethylated, probably to asymmetric dimethylarginine. Post-translationally, methylated by PRMT1, in an insulin-dependent manner. The PRMT1-mediated methylation regulates tyrosine phosphorylation.

The protein resides in the nucleus. Its subcellular location is the cytoplasm. In terms of biological role, binds with high affinity to RNA molecules that contain AU-rich elements (AREs) found within the 3'-UTR of many proto-oncogenes and cytokine mRNAs. Also binds to double- and single-stranded DNA sequences in a specific manner and functions a transcription factor. Each of the RNA-binding domains specifically can bind solely to a single-stranded non-monotonous 5'-UUAG-3' sequence and also weaker to the single-stranded 5'-TTAGGG-3' telomeric DNA repeat. Binds RNA oligonucleotides with 5'-UUAGGG-3' repeats more tightly than the telomeric single-stranded DNA 5'-TTAGGG-3' repeats. Binding of RRM1 to DNA inhibits the formation of DNA quadruplex structure which may play a role in telomere elongation. May be involved in translationally coupled mRNA turnover. Implicated with other RNA-binding proteins in the cytoplasmic deadenylation/translational and decay interplay of the FOS mRNA mediated by the major coding-region determinant of instability (mCRD) domain. May play a role in the regulation of the rhythmic expression of circadian clock core genes. Directly binds to the 3'UTR of CRY1 mRNA and induces CRY1 rhythmic translation. May also be involved in the regulation of PER2 translation. The polypeptide is Heterogeneous nuclear ribonucleoprotein D0 (HNRNPD) (Homo sapiens (Human)).